Reading from the N-terminus, the 378-residue chain is Carbamoyl phosphate synthase small chain (378 aa).

The segment at 1–189 (MTKPAILALA…DSHPEIPAGE (189 aa)) is CPSase. L-glutamine contacts are provided by Ser47, Gly241, and Gly243. In terms of domain architecture, Glutamine amidotransferase type-1 spans 193 to 378 (HVVAYDYGVK…RFISAMAERR (186 aa)). Cys269 acts as the Nucleophile in catalysis. 5 residues coordinate L-glutamine: Leu270, Gln273, Asn311, Gly313, and Phe314. Active-site residues include His353 and Glu355.

It belongs to the CarA family. In terms of assembly, composed of two chains; the small (or glutamine) chain promotes the hydrolysis of glutamine to ammonia, which is used by the large (or ammonia) chain to synthesize carbamoyl phosphate. Tetramer of heterodimers (alpha,beta)4.

It catalyses the reaction hydrogencarbonate + L-glutamine + 2 ATP + H2O = carbamoyl phosphate + L-glutamate + 2 ADP + phosphate + 2 H(+). The enzyme catalyses L-glutamine + H2O = L-glutamate + NH4(+). Its pathway is amino-acid biosynthesis; L-arginine biosynthesis; carbamoyl phosphate from bicarbonate: step 1/1. The protein operates within pyrimidine metabolism; UMP biosynthesis via de novo pathway; (S)-dihydroorotate from bicarbonate: step 1/3. Its function is as follows. Small subunit of the glutamine-dependent carbamoyl phosphate synthetase (CPSase). CPSase catalyzes the formation of carbamoyl phosphate from the ammonia moiety of glutamine, carbonate, and phosphate donated by ATP, constituting the first step of 2 biosynthetic pathways, one leading to arginine and/or urea and the other to pyrimidine nucleotides. The small subunit (glutamine amidotransferase) binds and cleaves glutamine to supply the large subunit with the substrate ammonia. The sequence is that of Carbamoyl phosphate synthase small chain from Pseudomonas aeruginosa (strain ATCC 15692 / DSM 22644 / CIP 104116 / JCM 14847 / LMG 12228 / 1C / PRS 101 / PAO1).